The following is a 365-amino-acid chain: Probable 7-methylxanthine methyltransferase PCS2 (365 aa).

Tyr-19 contacts S-adenosyl-L-homocysteine. Residue Thr-26 coordinates theobromine. Residues Cys-62, Asp-99, Leu-100, Ser-134, and Phe-135 each contribute to the S-adenosyl-L-homocysteine site. Tyr-152, His-155, and Trp-156 together coordinate theobromine. Asn-173 lines the Mg(2+) pocket. Arg-221 serves as a coordination point for theobromine. Positions 259, 261, and 262 each coordinate Mg(2+).

The protein belongs to the methyltransferase superfamily. Type-7 methyltransferase family. The cofactor is Mg(2+).

It carries out the reaction 7-methylxanthine + S-adenosyl-L-methionine = theobromine + S-adenosyl-L-homocysteine + H(+). No detectable N-methyltransferase activity. The polypeptide is Probable 7-methylxanthine methyltransferase PCS2 (Camellia ptilophylla (Cocoa tea)).